Consider the following 357-residue polypeptide: Ion-translocating oxidoreductase complex subunit D (357 aa).

Helical transmembrane passes span 35–55, 88–108, and 119–139; these read VWLY…TVLV, LPPW…VVLG, and LFNP…VEMT. Thr-176 carries the post-translational modification FMN phosphoryl threonine. The next 5 membrane-spanning stretches (helical) occupy residues 209–229, 233–253, 261–281, 295–315, and 316–336; these read APGS…VYLI, VIAW…ATVF, YADA…FFIA, AVFA…GGYP, and EATA…DHWI.

The protein belongs to the NqrB/RnfD family. As to quaternary structure, the complex is composed of six subunits: RnfA, RnfB, RnfC, RnfD, RnfE and RnfG. It depends on FMN as a cofactor.

The protein localises to the cell inner membrane. Its function is as follows. Part of a membrane-bound complex that couples electron transfer with translocation of ions across the membrane. This chain is Ion-translocating oxidoreductase complex subunit D, found in Halorhodospira halophila (strain DSM 244 / SL1) (Ectothiorhodospira halophila (strain DSM 244 / SL1)).